The chain runs to 495 residues: Protein adenylyltransferase Fic (495 aa).

The segment at 1 to 23 (MGTEAEPPSPPSPPAQQQEQANP) is disordered. A helical transmembrane segment spans residues 36–58 (LYRLVLFFIAGSLTAWMFHAFSS). TPR repeat units follow at residues 121 to 154 (ALVS…APRH) and 155 to 189 (PEVL…SPSN). The Inhibitory (S/T)XXXE(G/N) motif motif lies at 246–251 (SVGIEG). ATP-binding positions include Glu-250 and 331-334 (VGGH). Positions 300-435 (ITIKDILELH…IRPFVRFIAD (136 aa)) constitute a Fido domain. His-378 is an active-site residue. Residues 382–389 (DGNGRTSR), 414–415 (YY), and Asn-422 each bind ATP.

It belongs to the fic family. Homodimer.

The protein localises to the membrane. It carries out the reaction L-tyrosyl-[protein] + ATP = O-(5'-adenylyl)-L-tyrosyl-[protein] + diphosphate. It catalyses the reaction L-threonyl-[protein] + ATP = 3-O-(5'-adenylyl)-L-threonyl-[protein] + diphosphate. The enzyme catalyses 3-O-(5'-adenylyl)-L-threonyl-[protein] + H2O = L-threonyl-[protein] + AMP + H(+). The side chain of Glu-250 determines which of the two opposing activities (AMPylase or de-AMPylase) will take place. In response to endoplasmic reticulum stress, mediates de-AMPylase activity. Adenylyltransferase activity is inhibited by the inhibitory helix present at the N-terminus: Glu-250 binds ATP and competes with ATP-binding at Arg-389, thereby preventing adenylyltransferase activity. In unstressed cells, disengagement of Glu-250 promotes adenylyltransferase activity. Activation dissociates ATP-binding from Glu-250, allowing ordered binding of the entire ATP moiety with the alpha-phosphate in an orientation that is productive for accepting an incoming target hydroxyl side chain. Its function is as follows. Protein that can both mediate the addition of adenosine 5'-monophosphate (AMP) to specific residues of target proteins (AMPylation), and the removal of the same modification from target proteins (de-AMPylation), depending on the context. The side chain of Glu-250 determines which of the two opposing activities (AMPylase or de-AMPylase) will take place. Acts as a key regulator of the unfolded protein response (UPR) by mediating AMPylation or de-AMPylation of Hsc70-3/BiP. In unstressed cells, acts as an adenylyltransferase by mediating AMPylation of Hsc70-3/BiP at 'Thr-518', thereby inactivating it. In response to endoplasmic reticulum stress, acts as a phosphodiesterase by mediating removal of ATP (de-AMPylation) from Hsc70-3/BiP at 'Thr-518', leading to restore HSPA5/BiP activity. The chain is Protein adenylyltransferase Fic from Drosophila erecta (Fruit fly).